Consider the following 450-residue polypeptide: Na(+)/H(+) antiporter NhaA 2 (450 aa).

The next 12 helical transmembrane spans lie at 43 to 63 (VGGA…NSPW), 86 to 106 (LTLG…VVGL), 124 to 144 (ALPM…FVAV), 155 to 175 (GWAI…AVIS), 185 to 205 (FLLT…AVFY), 208 to 228 (EINL…ALCV), 234 to 254 (SWWL…ESGV), 258 to 278 (VAGV…AGGP), 299 to 319 (VAVP…VSGL), 326 to 346 (PITL…IFLT), 364 to 384 (WIDV…SLLI), and 398 to 418 (FVKV…AVLL).

This sequence belongs to the NhaA Na(+)/H(+) (TC 2.A.33) antiporter family.

It localises to the cell membrane. It catalyses the reaction Na(+)(in) + 2 H(+)(out) = Na(+)(out) + 2 H(+)(in). In terms of biological role, na(+)/H(+) antiporter that extrudes sodium in exchange for external protons. The polypeptide is Na(+)/H(+) antiporter NhaA 2 (Mycobacterium sp. (strain JLS)).